Reading from the N-terminus, the 464-residue chain is Type I restriction enzyme EcoKI specificity subunit (464 aa).

The protein belongs to the type-I restriction system S methylase family. The type I restriction/modification system is composed of three polypeptides R, M and S. The restriction enzyme has stoichiometry R(2)M(2)S(1). The methyltransferase is composed of M(2)S(1). In terms of assembly, (Microbial infection) Interacts with Escherichia phage T7 protein Ocr; this interaction leads to the inhibition of the methyltransferase restriction enzyme M.EcoKI composed of M(2)S(1).

Its function is as follows. The specificity (S) subunit of a type I restriction enzyme; this subunit dictates DNA sequence specificity. The M and S subunits together form a methyltransferase (MTase) that methylates A-2 on the top and A-3 on the bottom strand of the sequence 5'-AACN(6)GTGC-3'. In the presence of the R subunit the complex can also act as an endonuclease, binding to the same target sequence but cutting the DNA some distance from this site. Whether the DNA is cut or modified depends on the methylation state of the target sequence. When the target site is unmodified, the DNA is cut. When the target site is hemimethylated, the complex acts as a maintenance MTase modifying the DNA so that both strands become methylated. After locating a non-methylated recognition site, the enzyme complex serves as a molecular motor that translocates DNA in an ATP-dependent manner until a collision occurs that triggers cleavage. The chain is Type I restriction enzyme EcoKI specificity subunit from Escherichia coli (strain K12).